A 109-amino-acid chain; its full sequence is SIAFSRAVFSEFLATLLFVFFGLGSALNWPQALPSVLQIAMAFGLAIGTLVQTLGHISGAHINPAVTVACLVGCHVSFLRATFYVAAQLLGAVAGAALLHELTPPDIRG.

Over 1–6 (SIAFSR) the chain is Cytoplasmic. Residues 7–27 (AVFSEFLATLLFVFFGLGSAL) traverse the membrane as a helical segment. Residues 28-35 (NWPQALPS) lie on the Extracellular side of the membrane. The helical transmembrane segment at 36 to 54 (VLQIAMAFGLAIGTLVQTL) threads the bilayer. At 55–59 (GHISG) the chain is on the cytoplasmic side. The discontinuously helical intramembrane region spans 60–69 (AHINPAVTVA). An NPA 1 motif is present at residues 63-65 (NPA). Over 70–80 (CLVGCHVSFLR) the chain is Cytoplasmic. A helical transmembrane segment spans residues 81 to 102 (ATFYVAAQLLGAVAGAALLHEL). Residues 103–109 (TPPDIRG) are Extracellular-facing.

It belongs to the MIP/aquaporin (TC 1.A.8) family. Homotetramer. Post-translationally, serine phosphorylation is necessary and sufficient for expression at the apical membrane. Endocytosis is not phosphorylation-dependent. In terms of processing, N-glycosylated.

The protein resides in the apical cell membrane. It is found in the basolateral cell membrane. It localises to the cell membrane. The protein localises to the cytoplasmic vesicle membrane. Its subcellular location is the golgi apparatus. The protein resides in the trans-Golgi network membrane. It catalyses the reaction H2O(in) = H2O(out). The enzyme catalyses glycerol(in) = glycerol(out). Its function is as follows. Forms a water-specific channel that provides the plasma membranes of renal collecting duct with high permeability to water, thereby permitting water to move in the direction of an osmotic gradient. Plays an essential role in renal water homeostasis. Could also be permeable to glycerol. In Amblysomus hottentotus (Hottentot golden mole), this protein is Aquaporin-2.